The chain runs to 139 residues: Myosin light chain kinase, smooth muscle (139 aa).

The disordered stretch occupies residues 48–97; it reads APTGENAKAPEMKARRPKSSLPPVLGTESDATVKKKPAPKTPPKAAMPPQ.

It belongs to the protein kinase superfamily. CAMK Ser/Thr protein kinase family. In terms of assembly, interacts with SVIL. The C-terminus is deglutamylated by AGTPBP1/CCP1, AGBL1/CCP4 and AGBL4/CCP6, leading to the formation of Myosin light chain kinase, smooth muscle, deglutamylated form. The consequences of C-terminal deglutamylation are unknown.

It catalyses the reaction L-seryl-[myosin light chain] + ATP = O-phospho-L-seryl-[myosin light chain] + ADP + H(+). The enzyme catalyses L-threonyl-[myosin light chain] + ATP = O-phospho-L-threonyl-[myosin light chain] + ADP + H(+). Functionally, phosphorylates a specific serine in the N-terminus of a myosin light chain. Also regulates actin-myosin interaction through a non-kinase activity. In Sus scrofa (Pig), this protein is Myosin light chain kinase, smooth muscle (MYLK).